The chain runs to 138 residues: Large ribosomal subunit protein bL17 (138 aa).

This sequence belongs to the bacterial ribosomal protein bL17 family. In terms of assembly, part of the 50S ribosomal subunit. Contacts protein L32.

This is Large ribosomal subunit protein bL17 from Granulibacter bethesdensis (strain ATCC BAA-1260 / CGDNIH1).